We begin with the raw amino-acid sequence, 445 residues long: tRNA modification GTPase MnmE (445 aa).

(6S)-5-formyl-5,6,7,8-tetrahydrofolate contacts are provided by Arg20, Glu79, and Lys119. One can recognise a TrmE-type G domain in the interval 215-371; sequence GLKLAIIGPP…ILKNIENIAE (157 aa). Residue Asn225 participates in K(+) binding. GTP-binding positions include 225 to 230, 244 to 250, and 269 to 272; these read NTGKSS, SNIAGTT, and DTAG. Ser229 is a Mg(2+) binding site. Ser244, Ile246, and Thr249 together coordinate K(+). Thr250 is a Mg(2+) binding site. Residue Lys445 participates in (6S)-5-formyl-5,6,7,8-tetrahydrofolate binding.

It belongs to the TRAFAC class TrmE-Era-EngA-EngB-Septin-like GTPase superfamily. TrmE GTPase family. Homodimer. Heterotetramer of two MnmE and two MnmG subunits. K(+) is required as a cofactor.

The protein localises to the cytoplasm. In terms of biological role, exhibits a very high intrinsic GTPase hydrolysis rate. Involved in the addition of a carboxymethylaminomethyl (cmnm) group at the wobble position (U34) of certain tRNAs, forming tRNA-cmnm(5)s(2)U34. The sequence is that of tRNA modification GTPase MnmE from Rickettsia prowazekii (strain Madrid E).